Consider the following 105-residue polypeptide: Small ribosomal subunit protein bS6 (105 aa).

The protein belongs to the bacterial ribosomal protein bS6 family.

Binds together with bS18 to 16S ribosomal RNA. This is Small ribosomal subunit protein bS6 from Lawsonia intracellularis (strain PHE/MN1-00).